Here is a 155-residue protein sequence, read N- to C-terminus: MSKVLEQVEAIVAPITDELQLELVDIAFEKEGPNWFLRIFIDKDGGVDIDECAAVSEKVSEKMDENDPITQNYFLEVSSPGAERPLKKEQDFENAVSKYVHVTSYEPIDGRKMWEGTLVSYDGTTLVITITDKTRKITCEIPKDKVAKARLAIQF.

It belongs to the RimP family.

It is found in the cytoplasm. Its function is as follows. Required for maturation of 30S ribosomal subunits. This Listeria monocytogenes serovar 1/2a (strain ATCC BAA-679 / EGD-e) protein is Ribosome maturation factor RimP.